A 315-amino-acid polypeptide reads, in one-letter code: tRNA-cytidine(32) 2-sulfurtransferase (315 aa).

A PP-loop motif motif is present at residues 39–44 (SGGKDS). Residues Cys114, Cys117, and Cys205 each coordinate [4Fe-4S] cluster.

It belongs to the TtcA family. As to quaternary structure, homodimer. It depends on Mg(2+) as a cofactor. [4Fe-4S] cluster serves as cofactor.

The protein resides in the cytoplasm. The enzyme catalyses cytidine(32) in tRNA + S-sulfanyl-L-cysteinyl-[cysteine desulfurase] + AH2 + ATP = 2-thiocytidine(32) in tRNA + L-cysteinyl-[cysteine desulfurase] + A + AMP + diphosphate + H(+). Its pathway is tRNA modification. In terms of biological role, catalyzes the ATP-dependent 2-thiolation of cytidine in position 32 of tRNA, to form 2-thiocytidine (s(2)C32). The sulfur atoms are provided by the cysteine/cysteine desulfurase (IscS) system. The chain is tRNA-cytidine(32) 2-sulfurtransferase from Ralstonia pickettii (strain 12J).